The following is a 128-amino-acid chain: MPYLSGLGNDLVRIQRFRRFLEAGKTAILERLFTEEERSFCLAKKDPAPHFAVRFAAKEAFLKALGTGLRYGIRWQDMAVVRNPEGKPDLVLDGEAARLFEDRGHVRLLLSCSHDGDYAFATVVFEGN.

Mg(2+) contacts are provided by Asp-10 and Glu-59.

Belongs to the P-Pant transferase superfamily. AcpS family. It depends on Mg(2+) as a cofactor.

It is found in the cytoplasm. It carries out the reaction apo-[ACP] + CoA = holo-[ACP] + adenosine 3',5'-bisphosphate + H(+). Functionally, transfers the 4'-phosphopantetheine moiety from coenzyme A to a Ser of acyl-carrier-protein. This Syntrophotalea carbinolica (strain DSM 2380 / NBRC 103641 / GraBd1) (Pelobacter carbinolicus) protein is Holo-[acyl-carrier-protein] synthase.